Here is a 147-residue protein sequence, read N- to C-terminus: Nucleoside diphosphate kinase (147 aa).

Positions 9, 57, 85, 91, 102, and 112 each coordinate ATP. His-115 serves as the catalytic Pros-phosphohistidine intermediate.

Belongs to the NDK family. Homotetramer. Mg(2+) serves as cofactor.

It localises to the cytoplasm. It catalyses the reaction a 2'-deoxyribonucleoside 5'-diphosphate + ATP = a 2'-deoxyribonucleoside 5'-triphosphate + ADP. It carries out the reaction a ribonucleoside 5'-diphosphate + ATP = a ribonucleoside 5'-triphosphate + ADP. Functionally, major role in the synthesis of nucleoside triphosphates other than ATP. The ATP gamma phosphate is transferred to the NDP beta phosphate via a ping-pong mechanism, using a phosphorylated active-site intermediate. The chain is Nucleoside diphosphate kinase from Brevibacillus brevis (strain 47 / JCM 6285 / NBRC 100599).